We begin with the raw amino-acid sequence, 103 residues long: Large ribosomal subunit protein bL21 (103 aa).

The protein belongs to the bacterial ribosomal protein bL21 family. Part of the 50S ribosomal subunit. Contacts protein L20.

Its function is as follows. This protein binds to 23S rRNA in the presence of protein L20. This chain is Large ribosomal subunit protein bL21, found in Aliivibrio salmonicida (strain LFI1238) (Vibrio salmonicida (strain LFI1238)).